The primary structure comprises 67 residues: Large ribosomal subunit protein uL29 (67 aa).

Belongs to the universal ribosomal protein uL29 family.

The protein is Large ribosomal subunit protein uL29 of Ehrlichia ruminantium (strain Gardel).